Reading from the N-terminus, the 531-residue chain is L-aspartate oxidase (531 aa).

Residues 11–14, lysine 33, 40–47, 151–152, and aspartate 205 each bind FAD; these read SGAA, NSVYAQGG, and TA. Arginine 272 functions as the Proton donor/acceptor in the catalytic mechanism. FAD contacts are provided by residues glutamate 353 and 369–370; that span reads SL.

It belongs to the FAD-dependent oxidoreductase 2 family. NadB subfamily. In terms of assembly, monomer. Homodimer. It depends on FAD as a cofactor.

The protein resides in the cytoplasm. It catalyses the reaction L-aspartate + O2 = iminosuccinate + H2O2. The catalysed reaction is fumarate + L-aspartate = iminosuccinate + succinate. It participates in cofactor biosynthesis; NAD(+) biosynthesis; iminoaspartate from L-aspartate (oxidase route): step 1/1. Its function is as follows. Catalyzes the oxidation of L-aspartate to iminoaspartate, the first step in the de novo biosynthesis of NAD(+). Can use either oxygen or fumarate as electron acceptors, which allows the enzyme to be functional under aerobic and anaerobic conditions. This is L-aspartate oxidase from Bacillus subtilis (strain 168).